The chain runs to 323 residues: Chitin-binding lectin 1 (323 aa).

Positions 1 to 22 (MKETAISVLALLTLFLLEVVSA) are cleaved as a signal peptide. A 4-hydroxyproline mark is found at Pro-50, Pro-51, Pro-53, and Pro-55. Pro-50, Pro-51, Pro-53, and Pro-55 each carry an O-linked (Ara...) hydroxyproline glycan. Chitin-binding type-1 domains lie at 58 to 101 (YPQC…QCPG) and 105 to 149 (EGRC…QCKL). Disulfide bonds link Cys-61–Cys-77, Cys-70–Cys-83, Cys-76–Cys-90, Cys-95–Cys-99, Cys-108–Cys-125, Cys-117–Cys-131, Cys-124–Cys-138, and Cys-143–Cys-147. Positions 78, 80, 82, and 89 each coordinate chitin. The interval 150 to 210 (PSPPPPPPPP…PPPPPPALPY (61 aa)) is extensin-like. O-linked (Gal) serine glycosylation occurs at Ser-151. 10 tandem repeats follow at residues 151–159 (SPPPPPPPP), 160–164 (SPPPP), 165–167 (SPP), 168–172 (SPPPP), 173–180 (SPPPPPPP), 181–185 (SPPPP), 186–190 (SPPPP), 191–192 (SP), 193–198 (SPPPPP), and 200–206 (SPPPPPP). The interval 151–206 (SPPPPPPPPSPPPPSPPSPPPPSPPPPPPPSPPPPSPPPPSPSPPPPPASPPPPPP) is 10 X approximate repeats of S-P-P-P-P. 4-hydroxyproline is present on residues Pro-152, Pro-153, Pro-154, Pro-155, Pro-156, Pro-157, Pro-158, and Pro-159. O-linked (Ara...) hydroxyproline glycosylation is found at Pro-152, Pro-153, Pro-154, Pro-155, Pro-156, Pro-157, Pro-158, and Pro-159. The tract at residues 154-203 (PPPPPPSPPPPSPPSPPPPSPPPPPPPSPPPPSPPPPSPSPPPPPASPPP) is disordered. Ser-160 carries O-linked (Gal) serine glycosylation. A 4-hydroxyproline mark is found at Pro-161, Pro-162, Pro-163, and Pro-164. Residues Pro-161, Pro-162, Pro-163, and Pro-164 are each glycosylated (O-linked (Ara...) hydroxyproline). O-linked (Gal) serine glycosylation occurs at Ser-165. 4-hydroxyproline is present on residues Pro-166 and Pro-167. O-linked (Ara...) hydroxyproline glycosylation is found at Pro-166 and Pro-167. The O-linked (Gal) serine glycan is linked to Ser-168. 4-hydroxyproline is present on residues Pro-169, Pro-170, Pro-171, and Pro-172. O-linked (Ara...) hydroxyproline glycosylation is found at Pro-169, Pro-170, Pro-171, and Pro-172. Residue Ser-173 is glycosylated (O-linked (Gal) serine). Pro-174, Pro-175, Pro-176, Pro-177, Pro-178, Pro-179, and Pro-180 each carry 4-hydroxyproline. O-linked (Ara...) hydroxyproline glycosylation is found at Pro-174, Pro-175, Pro-176, Pro-177, Pro-178, Pro-179, and Pro-180. Ser-181 carries an O-linked (Gal) serine glycan. Residues Pro-182, Pro-183, Pro-184, and Pro-185 each carry the 4-hydroxyproline modification. Residues Pro-182, Pro-183, Pro-184, and Pro-185 are each glycosylated (O-linked (Ara...) hydroxyproline). O-linked (Gal) serine glycosylation occurs at Ser-186. 4 positions are modified to 4-hydroxyproline: Pro-187, Pro-188, Pro-189, and Pro-190. 4 O-linked (Ara...) hydroxyproline glycosylation sites follow: Pro-187, Pro-188, Pro-189, and Pro-190. O-linked (Gal) serine glycosylation is present at Ser-191. Position 192 is a 4-hydroxyproline (Pro-192). An O-linked (Ara...) hydroxyproline glycan is attached at Pro-192. Ser-193 is a glycosylation site (O-linked (Gal) serine). Residues Pro-194, Pro-195, Pro-196, Pro-197, and Pro-198 each carry the 4-hydroxyproline modification. Pro-194, Pro-195, Pro-196, Pro-197, and Pro-198 each carry an O-linked (Ara...) hydroxyproline glycan. Ser-200 carries O-linked (Gal) serine glycosylation. 7 positions are modified to 4-hydroxyproline: Pro-201, Pro-202, Pro-203, Pro-204, Pro-205, Pro-206, and Pro-209. 7 O-linked (Ara...) hydroxyproline glycosylation sites follow: Pro-201, Pro-202, Pro-203, Pro-204, Pro-205, Pro-206, and Pro-209. 2 Chitin-binding type-1 domains span residues 210-253 (YPQC…QCPG) and 257-301 (EGRC…QCNT). Cystine bridges form between Cys-213-Cys-229, Cys-222-Cys-235, Cys-228-Cys-242, Cys-247-Cys-251, Cys-260-Cys-277, Cys-269-Cys-283, Cys-276-Cys-290, and Cys-295-Cys-299. Residues Ser-230, Trp-232, Trp-234, and Tyr-241 each coordinate chitin.

The protein in the central section; belongs to the extensin family. Homodimer. Heavily glycosylated with beta-arabinose on hydroxyprolines and with alpha-galactose on serines of the extensin-like domain. As no other sugars could be detected in the native lectin, it is unlikely that the three putative N-glycosylation sites are actually glycosylated. In terms of processing, the N-terminus is blocked. The N-terminal sequences proposed in PubMed:9022287 and PubMed:11056399 originate probably from truncated proteins.

Functionally, this protein might function as a defense against chitin containing pathogens. Binds to several branched or linear N-acetyllactosamine-containing glycosphingolipids and also to lactosylceramide with sphingosine and non-hydroxy fatty acids. The sequence is that of Chitin-binding lectin 1 from Solanum tuberosum (Potato).